The chain runs to 302 residues: Ribosomal protein L11 methyltransferase (302 aa).

S-adenosyl-L-methionine contacts are provided by T148, G169, D191, and N237.

Belongs to the methyltransferase superfamily. PrmA family.

It is found in the cytoplasm. The catalysed reaction is L-lysyl-[protein] + 3 S-adenosyl-L-methionine = N(6),N(6),N(6)-trimethyl-L-lysyl-[protein] + 3 S-adenosyl-L-homocysteine + 3 H(+). In terms of biological role, methylates ribosomal protein L11. The sequence is that of Ribosomal protein L11 methyltransferase from Desulfosudis oleivorans (strain DSM 6200 / JCM 39069 / Hxd3) (Desulfococcus oleovorans).